The chain runs to 461 residues: Complement C1r subcomponent-like protein (461 aa).

A signal peptide spans 1 to 22 (MCWLLLWGILHTCPTQASVLLA). A CUB domain is found at 23–139 (QQFPQQLTSP…KGFLALYQAA (117 aa)). Intrachain disulfides connect C71–C89 and C164–C197. A Sushi domain is found at 138–199 (AAVSQPNGDA…RGEEVPECVP (62 aa)). Positions 214–453 (TFGSSRAKPG…YVDWIKGVIE (240 aa)) constitute a Peptidase S1 domain. The active-site Charge relay system is H252. N265 carries N-linked (GlcNAc...) asparagine glycosylation. The Charge relay system role is filled by D308. The N-linked (GlcNAc...) asparagine glycan is linked to N332. Disulfide bonds link C371-C390 and C401-C431. The active-site Charge relay system is the S405.

It belongs to the peptidase S1 family.

It localises to the secreted. Functionally, mediates the proteolytic cleavage of HP/haptoglobin in the endoplasmic reticulum. The chain is Complement C1r subcomponent-like protein (C1rl) from Rattus norvegicus (Rat).